The sequence spans 313 residues: HPr kinase/phosphorylase (313 aa).

Catalysis depends on residues histidine 140 and lysine 161. 155–162 (GNSGAGKS) lines the ATP pocket. Serine 162 is a Mg(2+) binding site. Aspartate 179 (proton acceptor; for phosphorylation activity. Proton donor; for dephosphorylation activity) is an active-site residue. Residues 203–212 (IEVRGLGILN) are important for the catalytic mechanism of both phosphorylation and dephosphorylation. Glutamate 204 provides a ligand contact to Mg(2+). Residue arginine 246 is part of the active site. An important for the catalytic mechanism of dephosphorylation region spans residues 267-272 (PVAAGR).

The protein belongs to the HPrK/P family. Homohexamer. Requires Mg(2+) as cofactor.

It carries out the reaction [HPr protein]-L-serine + ATP = [HPr protein]-O-phospho-L-serine + ADP + H(+). It catalyses the reaction [HPr protein]-O-phospho-L-serine + phosphate + H(+) = [HPr protein]-L-serine + diphosphate. Its function is as follows. Catalyzes the ATP- as well as the pyrophosphate-dependent phosphorylation of a specific serine residue in HPr, a phosphocarrier protein of the phosphoenolpyruvate-dependent sugar phosphotransferase system (PTS). HprK/P also catalyzes the pyrophosphate-producing, inorganic phosphate-dependent dephosphorylation (phosphorolysis) of seryl-phosphorylated HPr (P-Ser-HPr). The protein is HPr kinase/phosphorylase of Aromatoleum aromaticum (strain DSM 19018 / LMG 30748 / EbN1) (Azoarcus sp. (strain EbN1)).